Reading from the N-terminus, the 154-residue chain is Small ribosomal subunit protein uS13 (154 aa).

The protein belongs to the universal ribosomal protein uS13 family.

The protein localises to the cytoplasm. In terms of biological role, located at the top of the head of the 40S subunit, it contacts several helices of the 18S rRNA. In Dictyostelium discoideum (Social amoeba), this protein is Small ribosomal subunit protein uS13 (rps18).